Here is a 237-residue protein sequence, read N- to C-terminus: Aspartate/glutamate leucyltransferase (237 aa).

Belongs to the R-transferase family. Bpt subfamily.

The protein localises to the cytoplasm. It carries out the reaction N-terminal L-glutamyl-[protein] + L-leucyl-tRNA(Leu) = N-terminal L-leucyl-L-glutamyl-[protein] + tRNA(Leu) + H(+). The catalysed reaction is N-terminal L-aspartyl-[protein] + L-leucyl-tRNA(Leu) = N-terminal L-leucyl-L-aspartyl-[protein] + tRNA(Leu) + H(+). Functions in the N-end rule pathway of protein degradation where it conjugates Leu from its aminoacyl-tRNA to the N-termini of proteins containing an N-terminal aspartate or glutamate. The polypeptide is Aspartate/glutamate leucyltransferase (Marinobacter nauticus (strain ATCC 700491 / DSM 11845 / VT8) (Marinobacter aquaeolei)).